We begin with the raw amino-acid sequence, 55 residues long: Cop-6 protein (55 aa).

It belongs to the transcriptional regulatory CopG/NikR family.

In terms of biological role, acts in trans as a negative regulatory element in pE194 replication. The protein is Cop-6 protein of Staphylococcus aureus.